The primary structure comprises 377 residues: 3-dehydroquinate synthase (377 aa).

NAD(+)-binding positions include 113–117 (GVIGD), 137–138 (TT), Lys150, and Lys159. Zn(2+)-binding residues include Glu192, His254, and His273.

It belongs to the sugar phosphate cyclases superfamily. Dehydroquinate synthase family. Co(2+) serves as cofactor. Requires Zn(2+) as cofactor. NAD(+) is required as a cofactor.

The protein localises to the cytoplasm. It carries out the reaction 7-phospho-2-dehydro-3-deoxy-D-arabino-heptonate = 3-dehydroquinate + phosphate. Its pathway is metabolic intermediate biosynthesis; chorismate biosynthesis; chorismate from D-erythrose 4-phosphate and phosphoenolpyruvate: step 2/7. In terms of biological role, catalyzes the conversion of 3-deoxy-D-arabino-heptulosonate 7-phosphate (DAHP) to dehydroquinate (DHQ). This is 3-dehydroquinate synthase from Bartonella tribocorum (strain CIP 105476 / IBS 506).